A 329-amino-acid chain; its full sequence is Phenylalanine--tRNA ligase alpha subunit (329 aa).

A Mg(2+)-binding site is contributed by glutamate 254.

The protein belongs to the class-II aminoacyl-tRNA synthetase family. Phe-tRNA synthetase alpha subunit type 1 subfamily. In terms of assembly, tetramer of two alpha and two beta subunits. Mg(2+) serves as cofactor.

It localises to the cytoplasm. The enzyme catalyses tRNA(Phe) + L-phenylalanine + ATP = L-phenylalanyl-tRNA(Phe) + AMP + diphosphate + H(+). The protein is Phenylalanine--tRNA ligase alpha subunit (pheS) of Haemophilus influenzae (strain ATCC 51907 / DSM 11121 / KW20 / Rd).